The primary structure comprises 287 residues: Small ribosomal subunit biogenesis GTPase RsgA (287 aa).

Residues 61–218 (SSELIRPTVA…LVDTPGFTTL (158 aa)) enclose the CP-type G domain. GTP-binding positions include 110–113 (NKED) and 161–169 (GPSGAGKST). Zn(2+) is bound by residues Cys-242, Cys-247, His-249, and Cys-255.

The protein belongs to the TRAFAC class YlqF/YawG GTPase family. RsgA subfamily. Monomer. Associates with 30S ribosomal subunit, binds 16S rRNA. Requires Zn(2+) as cofactor.

Its subcellular location is the cytoplasm. Functionally, one of several proteins that assist in the late maturation steps of the functional core of the 30S ribosomal subunit. Helps release RbfA from mature subunits. May play a role in the assembly of ribosomal proteins into the subunit. Circularly permuted GTPase that catalyzes slow GTP hydrolysis, GTPase activity is stimulated by the 30S ribosomal subunit. The polypeptide is Small ribosomal subunit biogenesis GTPase RsgA (Clostridium perfringens (strain 13 / Type A)).